Consider the following 184-residue polypeptide: dCTP deaminase (184 aa).

DCTP-binding positions include 107–112, 131–133, Gln152, Tyr166, and Gln176; these read KSTYAR and TLE. The active-site Proton donor/acceptor is the Glu133.

This sequence belongs to the dCTP deaminase family. Homotrimer.

It catalyses the reaction dCTP + H2O + H(+) = dUTP + NH4(+). The protein operates within pyrimidine metabolism; dUMP biosynthesis; dUMP from dCTP (dUTP route): step 1/2. Functionally, catalyzes the deamination of dCTP to dUTP. The chain is dCTP deaminase from Gemmatimonas aurantiaca (strain DSM 14586 / JCM 11422 / NBRC 100505 / T-27).